We begin with the raw amino-acid sequence, 199 residues long: Probable GTP-binding protein EngB (199 aa).

In terms of domain architecture, EngB-type G spans 21–195 (IYTEIAFLGR…EQKIILESLG (175 aa)). Residues 29-36 (GRSNVGKS), 56-60 (GKTQL), 81-84 (DLPG), 151-154 (TKAD), and 174-176 (VSN) each bind GTP. Residues Ser36 and Thr58 each coordinate Mg(2+).

This sequence belongs to the TRAFAC class TrmE-Era-EngA-EngB-Septin-like GTPase superfamily. EngB GTPase family. Mg(2+) is required as a cofactor.

Functionally, necessary for normal cell division and for the maintenance of normal septation. The polypeptide is Probable GTP-binding protein EngB (Campylobacter lari (strain RM2100 / D67 / ATCC BAA-1060)).